The following is a 443-amino-acid chain: Glutamate--tRNA ligase 1 (443 aa).

Positions 10–20 match the 'HIGH' region motif; it reads PSPTGYIHVGN. The 'KMSKS' region signature appears at 241–245; it reads ALSKR. Lys244 contacts ATP.

This sequence belongs to the class-I aminoacyl-tRNA synthetase family. Glutamate--tRNA ligase type 1 subfamily. In terms of assembly, monomer.

The protein localises to the cytoplasm. It carries out the reaction tRNA(Glu) + L-glutamate + ATP = L-glutamyl-tRNA(Glu) + AMP + diphosphate. In terms of biological role, catalyzes the attachment of glutamate to tRNA(Glu) in a two-step reaction: glutamate is first activated by ATP to form Glu-AMP and then transferred to the acceptor end of tRNA(Glu). This chain is Glutamate--tRNA ligase 1, found in Ruegeria pomeroyi (strain ATCC 700808 / DSM 15171 / DSS-3) (Silicibacter pomeroyi).